The sequence spans 962 residues: DNA primase (962 aa).

The segment at 894–932 (CLRARHARSPPARTFVALSVDAHDRLCISLSQQCFATKC) adopts a CHC2-type zinc-finger fold.

The protein belongs to the herpesviridae DNA primase family. Associates with the helicase and the primase-associated factor to form the helicase-primase factor.

It is found in the host nucleus. Its function is as follows. Essential component of the helicase/primase complex. Unwinds the DNA at the replication forks and generates single-stranded DNA for both leading and lagging strand synthesis. The primase initiates primer synthesis and thereby produces large amount of short RNA primers on the lagging strand that the polymerase elongates using dNTPs. The sequence is that of DNA primase (UL52) from Sus scrofa (Pig).